The sequence spans 297 residues: Large ribosomal subunit protein uL15m (297 aa).

Residues 1-22 (MAGPVRGAAGPWALDLLRALPR) constitute a mitochondrion transit peptide. The tract at residues 27–68 (NLRPNPGSRKPERRRRGQRRGRKCGRGHKGERQRGTRPRLGF) is disordered. Over residues 37–53 (PERRRRGQRRGRKCGRG) the composition is skewed to basic residues.

Belongs to the universal ribosomal protein uL15 family. In terms of assembly, component of the mitochondrial ribosome large subunit (39S) which comprises a 16S rRNA and about 50 distinct proteins.

The protein resides in the mitochondrion. This chain is Large ribosomal subunit protein uL15m (MRPL15), found in Bos taurus (Bovine).